Here is a 542-residue protein sequence, read N- to C-terminus: Glutamyl-tRNA(Gln) amidotransferase subunit B, mitochondrial (542 aa).

Belongs to the GatB/GatE family. GatB subfamily. In terms of assembly, subunit of the heterotrimeric GatFAB amidotransferase (AdT) complex, composed of A, B and F subunits.

The protein localises to the mitochondrion. The catalysed reaction is L-glutamyl-tRNA(Gln) + L-glutamine + ATP + H2O = L-glutaminyl-tRNA(Gln) + L-glutamate + ADP + phosphate + H(+). Functionally, allows the formation of correctly charged Gln-tRNA(Gln) through the transamidation of misacylated Glu-tRNA(Gln) in the mitochondria. The reaction takes place in the presence of glutamine and ATP through an activated gamma-phospho-Glu-tRNA(Gln). This chain is Glutamyl-tRNA(Gln) amidotransferase subunit B, mitochondrial, found in Candida glabrata (strain ATCC 2001 / BCRC 20586 / JCM 3761 / NBRC 0622 / NRRL Y-65 / CBS 138) (Yeast).